The primary structure comprises 519 residues: Light-independent protochlorophyllide reductase subunit B (519 aa).

Aspartate 36 contributes to the [4Fe-4S] cluster binding site. Aspartate 274 serves as the catalytic Proton donor. Residue 409-410 (GL) coordinates substrate. Residues 426–465 (DEAGPSHHGGHSPKPSEAARTPDKVEERADPAPEAPQTGS) are disordered. Positions 445–456 (RTPDKVEERADP) are enriched in basic and acidic residues.

It belongs to the ChlB/BchB/BchZ family. Protochlorophyllide reductase is composed of three subunits; BchL, BchN and BchB. Forms a heterotetramer of two BchB and two BchN subunits. The cofactor is [4Fe-4S] cluster.

The catalysed reaction is chlorophyllide a + oxidized 2[4Fe-4S]-[ferredoxin] + 2 ADP + 2 phosphate = protochlorophyllide a + reduced 2[4Fe-4S]-[ferredoxin] + 2 ATP + 2 H2O. The protein operates within porphyrin-containing compound metabolism; bacteriochlorophyll biosynthesis (light-independent). Functionally, component of the dark-operative protochlorophyllide reductase (DPOR) that uses Mg-ATP and reduced ferredoxin to reduce ring D of protochlorophyllide (Pchlide) to form chlorophyllide a (Chlide). This reaction is light-independent. The NB-protein (BchN-BchB) is the catalytic component of the complex. The protein is Light-independent protochlorophyllide reductase subunit B of Jannaschia sp. (strain CCS1).